A 325-amino-acid polypeptide reads, in one-letter code: Melanocortin receptor 5 (325 aa).

Residues methionine 1 to glycine 37 lie on the Extracellular side of the membrane. Residues asparagine 2, asparagine 15, asparagine 20, and asparagine 28 are each glycosylated (N-linked (GlcNAc...) asparagine). A helical membrane pass occupies residues isoleucine 38–isoleucine 61. At valine 62–phenylalanine 73 the chain is on the cytoplasmic side. Residues phenylalanine 74–tyrosine 97 form a helical membrane-spanning segment. Residues leucine 98 to isoleucine 114 lie on the Extracellular side of the membrane. A helical membrane pass occupies residues aspartate 115 to valine 138. Residues aspartate 139 to threonine 155 are Cytoplasmic-facing. A helical transmembrane segment spans residues alanine 156–leucine 179. The Extracellular portion of the chain corresponds to tyrosine 180–valine 186. Residues isoleucine 187–leucine 211 traverse the membrane as a helical segment. Residues alanine 212 to threonine 239 are Cytoplasmic-facing. The chain crosses the membrane as a helical span at residues valine 240–proline 265. Residues glutamine 266 to phenylalanine 273 are Extracellular-facing. Residues methionine 274–phenylalanine 297 traverse the membrane as a helical segment. Residues arginine 298 to aspartate 325 lie on the Cytoplasmic side of the membrane. Residues cysteine 311 and cysteine 312 are each lipidated (S-palmitoyl cysteine).

The protein belongs to the G-protein coupled receptor 1 family. In terms of tissue distribution, expressed in the brain but not in the melanoma cells.

The protein resides in the cell membrane. Receptor for MSH (alpha, beta and gamma) and ACTH. The activity of this receptor is mediated by G proteins which activate adenylate cyclase. This receptor is a possible mediator of the immunomodulation properties of melanocortins. This is Melanocortin receptor 5 (MC5R) from Homo sapiens (Human).